A 372-amino-acid polypeptide reads, in one-letter code: Fatty acid 2-hydroxylase (372 aa).

The region spanning 8–86 is the Cytochrome b5 heme-binding domain; the sequence is AASFSPSEVQ…LEQYYVGELR (79 aa). Positions 43 and 69 each coordinate heme. The next 2 membrane-spanning stretches (helical) occupy residues 168 to 188 and 213 to 233; these read VWYS…WSYY and SMFP…EYLI. Residues 219–361 form the Fatty acid hydroxylase domain; that stretch reads FMLGTFLWSL…TKLWDYCFHT (143 aa). His-234, His-239, His-257, His-260, and His-261 together coordinate Zn(2+). The next 2 helical transmembrane spans lie at 268–288 and 290–310; these read SRLV…YLCM and LILP…GYVL. Zn(2+) is bound by residues His-315, His-319, His-336, His-339, and His-340.

The protein belongs to the sterol desaturase family. SCS7 subfamily. The cofactor is Zn(2+). In terms of tissue distribution, detected in differentiating cultured keratinocytes (at protein level). Detected in epidermis and cultured keratinocytes. Highly expressed in brain and colon. Detected at lower levels in testis, prostate, pancreas and kidney.

It localises to the endoplasmic reticulum membrane. The protein localises to the microsome membrane. The enzyme catalyses a 1,2-saturated fatty acid + 2 Fe(II)-[cytochrome b5] + O2 + 2 H(+) = a (R)-2-hydroxy fatty acid + 2 Fe(III)-[cytochrome b5] + H2O. It carries out the reaction hexadecanoate + 2 Fe(II)-[cytochrome b5] + O2 + 2 H(+) = (R)-2-hydroxyhexadecanoate + 2 Fe(III)-[cytochrome b5] + H2O. The catalysed reaction is octadecanoate + 2 Fe(II)-[cytochrome b5] + O2 + 2 H(+) = (R)-2-hydroxyoctadecanoate + 2 Fe(III)-[cytochrome b5] + H2O. It catalyses the reaction docosanoate + 2 Fe(II)-[cytochrome b5] + O2 + 2 H(+) = 2-hydroxydocosanoate + 2 Fe(III)-[cytochrome b5] + H2O. The enzyme catalyses tetracosanoate + 2 Fe(II)-[cytochrome b5] + O2 + 2 H(+) = (R)-2-hydroxytetracosanoate + 2 Fe(III)-[cytochrome b5] + H2O. It participates in lipid metabolism; fatty acid metabolism. Its pathway is sphingolipid metabolism; galactosylceramide biosynthesis. Functionally, catalyzes the hydroxylation of free fatty acids at the C-2 position to produce 2-hydroxy fatty acids, which are building blocks of sphingolipids and glycosphingolipids common in neural tissue and epidermis. FA2H is stereospecific for the production of (R)-2-hydroxy fatty acids. Plays an essential role in the synthesis of galactosphingolipids of the myelin sheath. Responsible for the synthesis of sphingolipids and glycosphingolipids involved in the formation of epidermal lamellar bodies critical for skin permeability barrier. Participates in the synthesis of glycosphingolipids and a fraction of type II wax diesters in sebaceous gland, specifically regulating hair follicle homeostasis. Involved in the synthesis of sphingolipids of plasma membrane rafts, controlling lipid raft mobility and trafficking of raft-associated proteins. The polypeptide is Fatty acid 2-hydroxylase (Homo sapiens (Human)).